The primary structure comprises 956 residues: Transient receptor potential channel pyrexia (956 aa).

At 1–491 the chain is on the cytoplasmic side; the sequence is MENVRFSIIE…LFLKWRRIRK (491 aa). ANK repeat units follow at residues 132 to 161, 166 to 195, 198 to 227, 231 to 260, 265 to 294, 298 to 327, 331 to 362, and 366 to 395; these read RGRT…DPNR, KEVT…SINI, EKRS…DPNT, YTET…DVRS, GKVT…EVDC, SHQT…NVNA, DGRT…DVNK, and YGYT…DITA. Residues 492 to 512 form a helical membrane-spanning segment; it reads FFLMSLAYHTLFVILFTFYVI. The Extracellular segment spans residues 513 to 525; sequence WVYVRCCKKEELC. A helical membrane pass occupies residues 526–546; that stretch reads VAPGYVSTIGYLVIILNLILL. Topologically, residues 547–565 are cytoplasmic; the sequence is GKEVFQMAHGLRGYAKYWE. The helical transmembrane segment at 566–584 threads the bilayer; it reads NWLQWTIGTGVLLCVTPET. At 585–601 the chain is on the extracellular side; it reads VRTDDLTAVPVWQHHVA. Residues 602-622 traverse the membrane as a helical segment; sequence AIVILLVWLELMMLVGRFPIF. Topologically, residues 623–638 are cytoplasmic; sequence GVYVQMFTKVAVNFAK. The helical transmembrane segment at 639-659 threads the bilayer; sequence FLLAYICLLVAFGLSFAVLFN. The Extracellular segment spans residues 660-701; sequence DYPAFENITWSFLKSITMMSGELEFEDIFYGDYAVKFPVTAH. Asparagine 666 carries N-linked (GlcNAc...) asparagine glycosylation. A helical membrane pass occupies residues 702-722; the sequence is IIFLSFVLLVTVILTNLMVGL. The Cytoplasmic portion of the chain corresponds to 723-956; sequence AVSDIQGLQV…VASSHIRRHR (234 aa).

It belongs to the transient receptor (TC 1.A.4) family. STrpC subfamily. In terms of assembly, homooligomer; between isoform A and isoform B. In terms of tissue distribution, expressed in various peripheral nerves and the central nerves in embryos. In adults, it is expressed in sensory neurons lying beneath the bristles around eyes, neurons innervating the bristles on the back of thorax and neurons in maxillary palps, proboscis and antennae. Expressed in multidendritic neurons, which mediate temperature sensing, as well as non-multidendritic neurons in larval epidermis. Localizes ubiquitously throughout neurites.

It is found in the membrane. In terms of biological role, receptor-activated non-selective cation channel involved in protection or tolerance from high temperature stress. Activated by temperatures above 40 degrees Celsius. More permeable to K(+) than to Na(+). May act in stress protection allow flies to survive in natural environments. In Drosophila melanogaster (Fruit fly), this protein is Transient receptor potential channel pyrexia (pyx).